Here is a 138-residue protein sequence, read N- to C-terminus: Phosphoribosyl-AMP cyclohydrolase (138 aa).

Position 86 (D86) interacts with Mg(2+). C87 contacts Zn(2+). D88 and D90 together coordinate Mg(2+). Positions 104 and 111 each coordinate Zn(2+).

It belongs to the PRA-CH family. As to quaternary structure, homodimer. Mg(2+) is required as a cofactor. It depends on Zn(2+) as a cofactor.

Its subcellular location is the cytoplasm. The catalysed reaction is 1-(5-phospho-beta-D-ribosyl)-5'-AMP + H2O = 1-(5-phospho-beta-D-ribosyl)-5-[(5-phospho-beta-D-ribosylamino)methylideneamino]imidazole-4-carboxamide. It participates in amino-acid biosynthesis; L-histidine biosynthesis; L-histidine from 5-phospho-alpha-D-ribose 1-diphosphate: step 3/9. Its function is as follows. Catalyzes the hydrolysis of the adenine ring of phosphoribosyl-AMP. This chain is Phosphoribosyl-AMP cyclohydrolase, found in Marinobacter nauticus (strain ATCC 700491 / DSM 11845 / VT8) (Marinobacter aquaeolei).